The sequence spans 3685 residues: Dystrophin (3685 aa).

Positions 1–240 are actin-binding; the sequence is MLWWEEVEDC…YITSLFQVLP (240 aa). 2 Calponin-homology (CH) domains span residues 15–119 and 134–240; these read DVQK…LHWQ and TNSE…QVLP. An ANK2- and ANK-3 binding region spans residues 63-72; the sequence is PKEKGSTRVH. Spectrin repeat units follow at residues 339–447, 448–556, 559–667, 719–828, 830–934, 943–1045, 1048–1154, 1157–1263, 1266–1367, 1368–1463, 1468–1568, 1571–1676, 1679–1778, 1779–1874, 1877–1979, 1992–2101, 2104–2208, 2211–2318, 2319–2423, 2475–2577, 2580–2686, 2689–2802, 2808–2930, and 2935–3040; these read VNLD…NLHR, VLMD…LLQD, LKWQ…QISQ, EIRK…WLEY, NNII…ELQT, RYQE…KLEE, NKLR…ALKG, EKTV…TLEE, ACWH…LLEQ, SIQS…LFQK, EQRL…QLEK, KLSR…LLLE, KHME…KASI, PLKE…KALE, HQWY…TVRE, EISY…RFDR, EKWR…RLEE, NILS…EIEA, QIKD…LRAK, FNRA…QLNE, KDST…ALEE, RLLQ…HLEA, KRLH…RKID, and RLRE…QLHE. Asn340 bears the Phosphothreonine mark. 2 positions are modified to phosphoserine: Tyr344 and Leu348. Phosphothreonine is present on residues Glu519, Ser616, and Ser629. The interval 1415–1913 is interaction with SYNM; the sequence is SDLTSHEISL…PEPRDERKIK (499 aa). Positions 3055-3088 constitute a WW domain; the sequence is TSVQGPWERAISPNKVPYYINHETQTTCWDHPKM. The segment at 3058-3408 is interaction with SYNM; it reads QGPWERAISP…TVLEGDNMET (351 aa). The ZZ-type; degenerate zinc finger occupies 3308-3364; it reads KHQAKCNICKECPIIGFRYRSLKHFNYDICQSCFFSGRVAKGHKMHYPMVEYCTPTT. Residues Cys3313, Cys3316, Cys3337, and Cys3340 each contribute to the Zn(2+) site. A binds to SNTB1 region spans residues 3466 to 3518; that stretch reads DDEHLLIQHYCQSLNQDSPLSQPRSPAQILISLESEERGELERILADLEEENR. Phosphoserine is present on residues Ser3483, Ser3490, and Ser3500. Disordered stretches follow at residues 3528-3554 and 3603-3685; these read KQQH…QSPR and EAKV…EDTM. 2 stretches are compositionally biased toward polar residues: residues 3607 to 3626 and 3662 to 3673; these read NGTT…SSQP and QLNNSFPSSRGR. Ser3612, Ser3613, Ser3617, Ser3623, Ser3624, and Ser3666 each carry phosphoserine.

In terms of assembly, interacts with SYNM. Interacts with the syntrophins SNTA1, SNTB1, SNTB2, SNTG1 and SNTG2. Interacts with KRT19. Component of the dystrophin-associated glycoprotein complex which is composed of three subcomplexes: a cytoplasmic complex comprised of DMD (or UTRN), DTNA and a number of syntrophins, such as SNTB1, SNTB2, SNTG1 and SNTG2, the transmembrane dystroglycan complex, and the sarcoglycan-sarcospan complex. Interacts with DAG1 (betaDAG1) with DMD; the interaction is inhibited by phosphorylation on the PPXY motif of DAG1. Interacts with CMYA5. Directly interacts with ANK2 and ANK3; these interactions do not interfere with betaDAG1-binding and are necessary for proper localization in muscle cells. Identified in a dystroglycan complex that contains at least PRX, DRP2, UTRN, DMD and DAG1. Interacts with DTNB. Interacts with PGM5; the interaction is direct. Interacts with NOS1; localizes NOS1 to sarcolemma in muscle cells. As to expression, expressed in muscle fibers accumulating in the costameres of myoplasm at the sarcolemma. Expressed in brain, muscle, kidney, lung and testis. Most tissues contain transcripts of multiple isoforms. Isoform 15: Only isoform to be detected in heart and liver and is also expressed in brain, testis and hepatoma cells.

Its subcellular location is the cell membrane. It is found in the sarcolemma. The protein resides in the cytoplasm. It localises to the cytoskeleton. The protein localises to the postsynaptic cell membrane. Functionally, anchors the extracellular matrix to the cytoskeleton via F-actin. Ligand for dystroglycan. Component of the dystrophin-associated glycoprotein complex which accumulates at the neuromuscular junction (NMJ) and at a variety of synapses in the peripheral and central nervous systems and has a structural function in stabilizing the sarcolemma. Also implicated in signaling events and synaptic transmission. This Homo sapiens (Human) protein is Dystrophin.